Consider the following 413-residue polypeptide: Elongation factor 1-alpha (413 aa).

One can recognise a tr-type G domain in the interval 5–211; it reads KTHMNLAFIG…DALDEPDKPV (207 aa). The tract at residues 14 to 21 is G1; that stretch reads GHVDHGKS. A GTP-binding site is contributed by 14–21; that stretch reads GHVDHGKS. Ser21 contacts Mg(2+). Residues 60–64 form a G2 region; it reads GVTID. Residues 81 to 84 are G3; it reads DCPG. GTP-binding positions include 81-85 and 136-139; these read DCPGH and NKMD. The tract at residues 136-139 is G4; it reads NKMD. Residues 175-177 are G5; sequence SAF.

The protein belongs to the TRAFAC class translation factor GTPase superfamily. Classic translation factor GTPase family. EF-Tu/EF-1A subfamily.

The protein localises to the cytoplasm. It catalyses the reaction GTP + H2O = GDP + phosphate + H(+). In terms of biological role, GTP hydrolase that promotes the GTP-dependent binding of aminoacyl-tRNA to the A-site of ribosomes during protein biosynthesis. This Methanosphaera stadtmanae (strain ATCC 43021 / DSM 3091 / JCM 11832 / MCB-3) protein is Elongation factor 1-alpha.